We begin with the raw amino-acid sequence, 340 residues long: Protein pelota homolog (340 aa).

It belongs to the eukaryotic release factor 1 family. Pelota subfamily. In terms of assembly, monomer. A divalent metal cation is required as a cofactor.

Its subcellular location is the cytoplasm. May function in recognizing stalled ribosomes, interact with stem-loop structures in stalled mRNA molecules, and effect endonucleolytic cleavage of the mRNA. May play a role in the release non-functional ribosomes and degradation of damaged mRNAs. Has endoribonuclease activity. This is Protein pelota homolog from Methanosphaerula palustris (strain ATCC BAA-1556 / DSM 19958 / E1-9c).